The chain runs to 668 residues: DNA damage-responsive serine/threonine-protein kinase RqkA (668 aa).

Residues 13 to 272 form the Protein kinase domain; that stretch reads YELLALLGEG…SGAALAHLWA (260 aa). ATP is bound by residues 19 to 27 and Lys-42; that span reads LGEGGSAQV. The active-site Proton acceptor is the Asp-137.

It belongs to the protein kinase superfamily. Ser/Thr protein kinase family. The cofactor is pyrroloquinoline quinone. In terms of processing, autophosphorylated.

It carries out the reaction L-seryl-[protein] + ATP = O-phospho-L-seryl-[protein] + ADP + H(+). The catalysed reaction is L-threonyl-[protein] + ATP = O-phospho-L-threonyl-[protein] + ADP + H(+). Autokinase activity is stimulated by DNA damage. Stimulated by PQQ and DNA ends in vitro. Plays an important role in radiation resistance and DNA double-strand break (DSB) repair. Involved in transcriptional regulation of genes important for bacterial stress response. Phosphorylates PprA in vitro. This Deinococcus radiodurans (strain ATCC 13939 / DSM 20539 / JCM 16871 / CCUG 27074 / LMG 4051 / NBRC 15346 / NCIMB 9279 / VKM B-1422 / R1) protein is DNA damage-responsive serine/threonine-protein kinase RqkA (rqkA).